Reading from the N-terminus, the 823-residue chain is Degenerin-like protein asic-1 (823 aa).

The Cytoplasmic segment spans residues 1-38; sequence MGKNSLKRALELDVVDFAEHTSAHGIPRAYVSTGWRRY. The helical transmembrane segment at 39 to 59 threads the bilayer; it reads MWLLCFLFCLSCFGHQAYLIV. Residues 60–767 lie on the Extracellular side of the membrane; it reads ERFNRNDIIV…FGGQLGLWMG (708 aa). 2 disulfide bridges follow: Cys86–Cys518 and Cys494–Cys501. N-linked (GlcNAc...) asparagine glycosylation is found at Asn228, Asn326, Asn347, Asn415, and Asn486. N-linked (GlcNAc...) asparagine glycans are attached at residues Asn527 and Asn546. 4 disulfides stabilise this stretch: Cys604-Cys687, Cys625-Cys683, Cys629-Cys681, and Cys638-Cys664. A GAS motif; ion selectivity filter motif is present at residues 767 to 769; that stretch reads GVS. The helical transmembrane segment at 768–788 threads the bilayer; sequence VSVITIGEVACFFFEVFISLI. Residues 789–795 are Cytoplasmic-facing; sequence SSNRTKR.

This sequence belongs to the amiloride-sensitive sodium channel (TC 1.A.6) family. In terms of assembly, homotrimer. Heterotrimer; with other ASIC proteins producing channel with different properties.

The protein localises to the cell membrane. The protein resides in the postsynaptic cell membrane. It is found in the cell projection. Its subcellular location is the dendrite. It catalyses the reaction Na(+)(in) = Na(+)(out). The catalysed reaction is K(+)(in) = K(+)(out). The enzyme catalyses Li(+)(in) = Li(+)(out). It carries out the reaction Ca(2+)(in) = Ca(2+)(out). Its function is as follows. Forms voltage-independent, pH-gated trimeric sodium channels that act as postsynaptic excitatory receptors in the nervous system, playing a crucial role in regulating synaptic plasticity, learning, and memory. Promotes synaptic vesicle fusion to positively regulate the release of dopamine at dopaminergic neuron synapses. Displays high selectivity for sodium ions but can also permit the permeation of other cations. The polypeptide is Degenerin-like protein asic-1 (Caenorhabditis elegans).